Reading from the N-terminus, the 279-residue chain is NADPH-dependent 7-cyano-7-deazaguanine reductase (279 aa).

86–88 (IES) is a substrate binding site. Residue 88–89 (SK) coordinates NADPH. Cys187 (thioimide intermediate) is an active-site residue. The Proton donor role is filled by Asp194. 226–227 (HE) is a substrate binding site. 255–256 (RG) lines the NADPH pocket.

Belongs to the GTP cyclohydrolase I family. QueF type 2 subfamily. In terms of assembly, homodimer.

It localises to the cytoplasm. It carries out the reaction 7-aminomethyl-7-carbaguanine + 2 NADP(+) = 7-cyano-7-deazaguanine + 2 NADPH + 3 H(+). The protein operates within tRNA modification; tRNA-queuosine biosynthesis. Its function is as follows. Catalyzes the NADPH-dependent reduction of 7-cyano-7-deazaguanine (preQ0) to 7-aminomethyl-7-deazaguanine (preQ1). This is NADPH-dependent 7-cyano-7-deazaguanine reductase from Actinobacillus pleuropneumoniae serotype 3 (strain JL03).